The following is a 26-amino-acid chain: PRKCH upstream open reading frame 2 (26 aa).

In terms of assembly, interacts with protein kinase C eta as well as other protein kinases including PRKCD, PRKCQ and PRKCE but not with PRKCG or PRKCZ; the interactions lead to inhibition of kinase activity.

Product of an upstream open reading frame (ORF) of PRKCH which regulates translation of the downstream protein kinase C eta (PKC-eta) ORF. Functions as a repressive element that maintains low basal levels of PKC-eta in growing cells but enhances its expression during stress conditions induced by amino acid starvation in a EIF2AK4/GCN2-dependent manner. In addition to its role in regulating PKC-eta translation, also inhibits the kinase activity of PKC-eta as well as other protein kinases including PRKCD, PRKCQ and PRKCE but not PRKCA, PRKCG or PRKCZ. This chain is PRKCH upstream open reading frame 2, found in Homo sapiens (Human).